The chain runs to 561 residues: MGKDLRIKSKAFDGTMRAPNRAMLRAVGLTDEDFKKPMIGVASTWAEVTPCNIHLNDLALLAKKGVRHSDAVPLVFNTITVSDGISMGTQGMNYSLPSRDLIADSIETVVGAENLDGLVAIGACDKNIPGCLIAIANAGVPSVFVYGGTIAPGNVDGKDIDIVSVFEGVGQHNAGAIDDNQLRKVECNACPGAGACGGMYTANTMASAAEALGISLPGSSSNPAESEEKQGDVEAAGEAIKDLLEKGIYPKDILTKKAFENAITVVMALGGSTNAILHLLAVSHAAEVDLTIDDFNRIQKKVPHLADLKPSGRFVMQDLHRVGGVQAVMKLLHENGYLHGDCLTVTGKTIAENLAEAPALKENQQVIMPFDNPKREDGPLIVLKGNLSPTGAVAKVSGVKVKRHTGPARVFNTEKEATQAILDNKIKEGDVLVIRYVGPKGGPGMPEMLSVSSILVGKGMGESVALLTDGRFSGGTHGLVVGHISPEAQDGGPIAFLQEGDMVTIDSNKREISMDVSEDEIKLRQGKWEAPELHKKGVLGKYAHNVTCSSKGAVTDYLNRE.

Residue Cys51 coordinates [2Fe-2S] cluster. Asp83 is a Mg(2+) binding site. Cys124 is a binding site for [2Fe-2S] cluster. Residues Asp125 and Lys126 each coordinate Mg(2+). Lys126 is subject to N6-carboxylysine. [2Fe-2S] cluster is bound at residue Cys196. A Mg(2+)-binding site is contributed by Glu447. The active-site Proton acceptor is the Ser473.

Belongs to the IlvD/Edd family. As to quaternary structure, homodimer. [2Fe-2S] cluster serves as cofactor. It depends on Mg(2+) as a cofactor.

The catalysed reaction is (2R)-2,3-dihydroxy-3-methylbutanoate = 3-methyl-2-oxobutanoate + H2O. It catalyses the reaction (2R,3R)-2,3-dihydroxy-3-methylpentanoate = (S)-3-methyl-2-oxopentanoate + H2O. Its pathway is amino-acid biosynthesis; L-isoleucine biosynthesis; L-isoleucine from 2-oxobutanoate: step 3/4. The protein operates within amino-acid biosynthesis; L-valine biosynthesis; L-valine from pyruvate: step 3/4. Functions in the biosynthesis of branched-chain amino acids. Catalyzes the dehydration of (2R,3R)-2,3-dihydroxy-3-methylpentanoate (2,3-dihydroxy-3-methylvalerate) into 2-oxo-3-methylpentanoate (2-oxo-3-methylvalerate) and of (2R)-2,3-dihydroxy-3-methylbutanoate (2,3-dihydroxyisovalerate) into 2-oxo-3-methylbutanoate (2-oxoisovalerate), the penultimate precursor to L-isoleucine and L-valine, respectively. The protein is Dihydroxy-acid dehydratase of Oceanobacillus iheyensis (strain DSM 14371 / CIP 107618 / JCM 11309 / KCTC 3954 / HTE831).